Consider the following 368-residue polypeptide: Chaperone protein DnaJ (368 aa).

A J domain is found at 5–75; that stretch reads DFYKILGVEK…TKRKQYDKFG (71 aa). A CR-type zinc finger spans residues 139-222; the sequence is GKEISQKLTK…CRGKTIVETK (84 aa). The Zn(2+) site is built by cysteine 152, cysteine 155, cysteine 169, cysteine 172, cysteine 196, cysteine 199, cysteine 210, and cysteine 213. 4 CXXCXGXG motif repeats span residues 152–159, 169–176, 196–203, and 210–217; these read CDNCKGSG, CYNCQGRG, CSVCLGSG, and CKKCRGKT.

It belongs to the DnaJ family. As to quaternary structure, homodimer. Zn(2+) serves as cofactor.

It localises to the cytoplasm. Functionally, participates actively in the response to hyperosmotic and heat shock by preventing the aggregation of stress-denatured proteins and by disaggregating proteins, also in an autonomous, DnaK-independent fashion. Unfolded proteins bind initially to DnaJ; upon interaction with the DnaJ-bound protein, DnaK hydrolyzes its bound ATP, resulting in the formation of a stable complex. GrpE releases ADP from DnaK; ATP binding to DnaK triggers the release of the substrate protein, thus completing the reaction cycle. Several rounds of ATP-dependent interactions between DnaJ, DnaK and GrpE are required for fully efficient folding. Also involved, together with DnaK and GrpE, in the DNA replication of plasmids through activation of initiation proteins. In Mesomycoplasma hyopneumoniae (strain 232) (Mycoplasma hyopneumoniae), this protein is Chaperone protein DnaJ.